The primary structure comprises 82 residues: Small ribosomal subunit protein bS16 (82 aa).

This sequence belongs to the bacterial ribosomal protein bS16 family.

This chain is Small ribosomal subunit protein bS16, found in Caldanaerobacter subterraneus subsp. tengcongensis (strain DSM 15242 / JCM 11007 / NBRC 100824 / MB4) (Thermoanaerobacter tengcongensis).